Here is a 712-residue protein sequence, read N- to C-terminus: Ribosomal RNA large subunit methyltransferase K/L (712 aa).

Residues 43-154 (LAYRITLWTR…NGQLTISMNF (112 aa)) form the THUMP domain.

Belongs to the methyltransferase superfamily. RlmKL family.

It is found in the cytoplasm. The catalysed reaction is guanosine(2445) in 23S rRNA + S-adenosyl-L-methionine = N(2)-methylguanosine(2445) in 23S rRNA + S-adenosyl-L-homocysteine + H(+). It catalyses the reaction guanosine(2069) in 23S rRNA + S-adenosyl-L-methionine = N(2)-methylguanosine(2069) in 23S rRNA + S-adenosyl-L-homocysteine + H(+). Functionally, specifically methylates the guanine in position 2445 (m2G2445) and the guanine in position 2069 (m7G2069) of 23S rRNA. The polypeptide is Ribosomal RNA large subunit methyltransferase K/L (Shewanella frigidimarina (strain NCIMB 400)).